A 534-amino-acid polypeptide reads, in one-letter code: Zinc finger protein 671 (534 aa).

Positions V49–E120 constitute a KRAB domain. Residues Y192–P214 form a C2H2-type 1; degenerate zinc finger. C2H2-type zinc fingers lie at residues H285–H307, Y313–H335, Y341–H363, Y369–H391, Y397–H419, Y425–H447, Y451–H473, Y479–H501, and Y507–H529.

This sequence belongs to the krueppel C2H2-type zinc-finger protein family.

It localises to the nucleus. Its function is as follows. May be involved in transcriptional regulation. The chain is Zinc finger protein 671 (ZNF671) from Homo sapiens (Human).